A 65-amino-acid chain; its full sequence is LTCVTSKSIFGITTEDCPDGQNLCFKRRHYVVPKIYDITRGCVATCPIPENYDSIHCCKTEKCNN.

4 disulfide bridges follow: Cys3-Cys24, Cys17-Cys42, Cys46-Cys57, and Cys58-Cys63.

The protein belongs to the three-finger toxin family. Short-chain subfamily. Aminergic toxin sub-subfamily. As to expression, expressed by the venom gland.

Its subcellular location is the secreted. In terms of biological role, highly potent on various alpha-adrenoceptors (ADRA) (subnanomolar affinity for ADRA1A). Order of potency is the following: ADRA1A (Ki=0.37 nM) &gt; ADRA1B (Ki=10.47 nM) &gt; ADRA1D (Ki=104.71 nM) &gt; ADRA2C (Ki=165.96 nM). Were also found to reversibly bind to muscarinic acetylcholine receptors (CHRM), but the affinity is much weaker (CHRM1, Ki=1778.28 nM; CHRM4, Ki=4466.84 nM; CHRM2, Ki=17782.79 nM). The chain is Adrenergic toxin rho-elapitoxin-Dp1b from Dendroaspis polylepis polylepis (Black mamba).